We begin with the raw amino-acid sequence, 74 residues long: UPF0270 protein NT01EI_3666 (74 aa).

This sequence belongs to the UPF0270 family.

The sequence is that of UPF0270 protein NT01EI_3666 from Edwardsiella ictaluri (strain 93-146).